We begin with the raw amino-acid sequence, 179 residues long: Sodium/potassium-transporting ATPase subunit beta-1-interacting protein 3 (179 aa).

Transmembrane regions (helical) follow at residues 5–22, 35–55, 62–82, and 151–171; these read TGRCTLVFICTLQMLVAL, APILGNFLHIIVVILGLFGTI, IVAYTIWTAFWVAWNVFIICF, and AVQILLSLIGFVYACYVISVI.

Belongs to the NKAIN family. In terms of assembly, interacts with atp1b1 C-terminus.

It localises to the cell membrane. The protein is Sodium/potassium-transporting ATPase subunit beta-1-interacting protein 3 (nkain3) of Xenopus laevis (African clawed frog).